Consider the following 323-residue polypeptide: Lipoyl synthase (323 aa).

Residues cysteine 61, cysteine 66, cysteine 72, cysteine 87, cysteine 91, cysteine 94, and serine 300 each coordinate [4Fe-4S] cluster. Residues 73-289 (WDKKHATFMI…ETVAYSKGFL (217 aa)) form the Radical SAM core domain.

The protein belongs to the radical SAM superfamily. Lipoyl synthase family. It depends on [4Fe-4S] cluster as a cofactor.

It localises to the cytoplasm. The catalysed reaction is [[Fe-S] cluster scaffold protein carrying a second [4Fe-4S](2+) cluster] + N(6)-octanoyl-L-lysyl-[protein] + 2 oxidized [2Fe-2S]-[ferredoxin] + 2 S-adenosyl-L-methionine + 4 H(+) = [[Fe-S] cluster scaffold protein] + N(6)-[(R)-dihydrolipoyl]-L-lysyl-[protein] + 4 Fe(3+) + 2 hydrogen sulfide + 2 5'-deoxyadenosine + 2 L-methionine + 2 reduced [2Fe-2S]-[ferredoxin]. Its pathway is protein modification; protein lipoylation via endogenous pathway; protein N(6)-(lipoyl)lysine from octanoyl-[acyl-carrier-protein]: step 2/2. Catalyzes the radical-mediated insertion of two sulfur atoms into the C-6 and C-8 positions of the octanoyl moiety bound to the lipoyl domains of lipoate-dependent enzymes, thereby converting the octanoylated domains into lipoylated derivatives. This chain is Lipoyl synthase, found in Rhizobium etli (strain ATCC 51251 / DSM 11541 / JCM 21823 / NBRC 15573 / CFN 42).